Here is a 165-residue protein sequence, read N- to C-terminus: UPF0114 protein in repA1-repA2 intergenic region (165 aa).

The next 3 membrane-spanning stretches (helical) occupy residues 10 to 32 (YASR…LLTL), 53 to 75 (LILI…MVMF), and 136 to 155 (IMWC…GMAC).

Belongs to the UPF0114 family.

It is found in the cell membrane. In Buchnera aphidicola subsp. Geoica urticularia, this protein is UPF0114 protein in repA1-repA2 intergenic region.